A 464-amino-acid polypeptide reads, in one-letter code: Glucan 1,3-beta-glucosidase 3 (464 aa).

This sequence belongs to the glycosyl hydrolase 5 (cellulase A) family.

It carries out the reaction Successive hydrolysis of beta-D-glucose units from the non-reducing ends of (1-&gt;3)-beta-D-glucans, releasing alpha-glucose.. The chain is Glucan 1,3-beta-glucosidase 3 (exg3) from Schizosaccharomyces pombe (strain 972 / ATCC 24843) (Fission yeast).